We begin with the raw amino-acid sequence, 84 residues long: U4-theraphotoxin-Hhn1aa (84 aa).

A signal peptide spans 1–22; the sequence is MKVTLIAILTCAAVLVLHTTAA. Positions 23–47 are excised as a propeptide; it reads EELEESQLMEVGMPDTELAAVDEER. Cystine bridges form between cysteine 51-cysteine 65 and cysteine 55-cysteine 76.

Belongs to the neurotoxin 12 (Hwtx-2) family. 02 (Hwtx-2) subfamily. Expressed by the venom gland.

Its subcellular location is the secreted. Postsynaptic neurotoxin. In Cyriopagopus hainanus (Chinese bird spider), this protein is U4-theraphotoxin-Hhn1aa.